Reading from the N-terminus, the 381-residue chain is Protein pelota homolog (381 aa).

Belongs to the eukaryotic release factor 1 family. Pelota subfamily. As to quaternary structure, component of the Pelota-HBS1L complex, also named Dom34-Hbs1 complex, composed of pelo-1 and hbs-1. It depends on a divalent metal cation as a cofactor.

The protein resides in the cytoplasm. Its subcellular location is the nucleus. Component of the Pelota-HBS1L complex, a complex that recognizes stalled ribosomes and triggers the No-Go Decay (NGD) pathway. In the Pelota-HBS1L complex, pelo-1 recognizes ribosomes stalled at the 3' end of an mRNA and engages stalled ribosomes by destabilizing mRNA in the mRNA channel. Following ribosome-binding, the Pelota-HBS1L complex promotes the disassembly of stalled ribosomes, followed by degradation of damaged mRNAs as part of the NGD pathway. In Caenorhabditis elegans, this protein is Protein pelota homolog.